Here is a 74-residue protein sequence, read N- to C-terminus: Kappa-scoloptoxin(07)-Ssm2a (74 aa).

A signal peptide spans 1–19 (MLVFYALLFVTVFSNTVMG). A propeptide spanning residues 20–41 (ATIDKPIPKPILREAIEEIEVN) is cleaved from the precursor.

It belongs to the scoloptoxin-07 family. In terms of processing, contains 3 disulfide bonds. Expressed by the venom gland.

The protein resides in the secreted. In terms of biological role, toxin that inhibits voltage-gated potassium channel currents in DRG neurons (IC(50)=about 570 nM). In vivo, induces neurotoxicity shown by twitching, paralysis, and body contraction. In vivo, insects injected with this toxin showed signs of neurotoxicity including twitching, paralysis, and body contraction. The polypeptide is Kappa-scoloptoxin(07)-Ssm2a (Scolopendra mutilans (Chinese red-headed centipede)).